The primary structure comprises 865 residues: Fatty acyl-CoA synthetase and RNA processing-associated kinase 1 (865 aa).

A Protein kinase domain is found at 41–313 (YILGSTLGEG…LKQIKKHEWL (273 aa)). ATP is bound by residues 47–55 (LGEGEFGKV) and Lys-80. The Proton acceptor role is filled by Asp-175. The disordered stretch occupies residues 341–398 (KPRRRYGSRPQSSCSTSSLGSRSDKRDSLVIDSTLITFPAPPQESQNHIITRPASIAS). Low complexity predominate over residues 352-361 (SSCSTSSLGS). Ser-441 carries the phosphoserine modification. Disordered regions lie at residues 480-554 (ISGS…YTTP), 673-733 (TEES…LNEA), and 754-782 (SLYSSMDSKRKPSPPSQRRPKKDDSYQTN). Residues 494-538 (STTMQTSKIQPNNMASSQNHQYNKNKTQNSLQSAKNFYRTSSSSH) show a composition bias toward polar residues. Basic and acidic residues-rich tracts occupy residues 690–708 (EGQESIDKAKTEDTSEKGS) and 724–733 (NHLERSLNEA).

It belongs to the protein kinase superfamily. Ser/Thr protein kinase family. In terms of assembly, interacts with FAA3, POL5 and TPA1.

Its subcellular location is the cytoplasm. It carries out the reaction L-seryl-[protein] + ATP = O-phospho-L-seryl-[protein] + ADP + H(+). The enzyme catalyses L-threonyl-[protein] + ATP = O-phospho-L-threonyl-[protein] + ADP + H(+). In terms of biological role, putative serine/threonine-protein kinase that may be involved in rRNA transcription and ribosome biogenesis. The protein is Fatty acyl-CoA synthetase and RNA processing-associated kinase 1 (FRK1) of Saccharomyces cerevisiae (strain ATCC 204508 / S288c) (Baker's yeast).